Consider the following 107-residue polypeptide: Nucleoid-associated protein amb4104 (107 aa).

This sequence belongs to the YbaB/EbfC family. Homodimer.

It localises to the cytoplasm. It is found in the nucleoid. Binds to DNA and alters its conformation. May be involved in regulation of gene expression, nucleoid organization and DNA protection. This chain is Nucleoid-associated protein amb4104, found in Paramagnetospirillum magneticum (strain ATCC 700264 / AMB-1) (Magnetospirillum magneticum).